A 607-amino-acid polypeptide reads, in one-letter code: DNA polymerase (607 aa).

One can recognise a 3'-5' exonuclease domain in the interval 1 to 213 (MIELRHEVQG…CSALAPLVPD (213 aa)). Positions 214-607 (VSRPLVPYEH…SWGSLYGADY (394 aa)) are polymerase.

The protein belongs to the DNA polymerase type-A family.

It catalyses the reaction DNA(n) + a 2'-deoxyribonucleoside 5'-triphosphate = DNA(n+1) + diphosphate. Replicates viral genomic DNA. This polymerase possesses two enzymatic activities: DNA synthesis (polymerase) and an exonucleolytic activity that degrades single-stranded DNA in the 3'-5' direction. The protein is DNA polymerase (44) of Mycobacterium phage D29 (Mycobacteriophage D29).